Consider the following 331-residue polypeptide: MLSPERLALPDYEYLAQRHVLTYMEDAVCQLLENREDISQYGIARFFTEYFNSVCQGTHILFREFSFVQATPHNRVSFLRAFWRCFRTVGKNGDLLTMKEYHCLLQLLCPDFPLELTQKAARIVLMDDAMDCLMSFSDFLFAFQIQFYYSEFLDSVAAIYENLLSGKNPNTVIVPTSSSGQHRQRPALGEAGMLEGVEASLFYQCLENLCDRHKYSCPPPALVKEALSNVQRLTFYGFLMALSKHHGINQALGALPDKGDLMHDPAMDEELERLLAQVPGLVNSVTASPEASCLPSRTPPRVGSPWRPLHHSRKVDGESDGSTEETDESET.

Residues 1–111 (MLSPERLALP…HCLLQLLCPD (111 aa)) are required for interaction with PCM1. Residues 1–225 (MLSPERLALP…SCPPPALVKE (225 aa)) form a required for interaction with TPGS1, LRRC49, and TTLL1 region. The tract at residues 112–331 (FPLELTQKAA…STEETDESET (220 aa)) is required for interaction with TPGS2. Residues 288–331 (SPEASCLPSRTPPRVGSPWRPLHHSRKVDGESDGSTEETDESET) form a disordered region. A compositionally biased stretch (acidic residues) spans 318-331 (ESDGSTEETDESET). S319 bears the Phosphoserine mark.

Belongs to the CSTPP1 family. As to quaternary structure, interacts with PCM1. Interacts with TTLL1, TPGS1, TPGS2 and LRRC49; the interactions link CSTPP1 to the complex TPGC. Binds to alpha-tubulin.

The protein localises to the cytoplasm. It localises to the cytoskeleton. Its subcellular location is the microtubule organizing center. The protein resides in the centrosome. It is found in the centriolar satellite. Regulator of the tubulin polyglutamylase complex (TPGC) that controls cytoskeletal organization, nuclear shape, and cilium disassembly by balancing microtubule and actin assembly. Regulates the assembly and stability of the TPGC and thereby modulates polyglutamylation of the microtubule, which antagonizes MAP4 binding. This chain is Centriolar satellite-associated tubulin polyglutamylase complex regulator 1 (CSTPP1), found in Pongo abelii (Sumatran orangutan).